The following is a 333-amino-acid chain: L-lactate dehydrogenase B chain (333 aa).

NAD(+) contacts are provided by residues 29-57 (GQVGMACAISILGKGLCDELALVDVWEDK) and Arg-99. Arg-106, Asn-138, and Arg-169 together coordinate substrate. An NAD(+)-binding site is contributed by Asn-138. His-193 acts as the Proton acceptor in catalysis. Residue Thr-248 coordinates substrate.

It belongs to the LDH/MDH superfamily. LDH family. Homotetramer.

The protein resides in the cytoplasm. The enzyme catalyses (S)-lactate + NAD(+) = pyruvate + NADH + H(+). The protein operates within fermentation; pyruvate fermentation to lactate; (S)-lactate from pyruvate: step 1/1. Interconverts simultaneously and stereospecifically pyruvate and lactate with concomitant interconversion of NADH and NAD(+). The polypeptide is L-lactate dehydrogenase B chain (LDHB) (Trachemys scripta elegans (Red-eared slider turtle)).